Consider the following 417-residue polypeptide: NADH-quinone oxidoreductase subunit D (417 aa).

This sequence belongs to the complex I 49 kDa subunit family. As to quaternary structure, NDH-1 is composed of 14 different subunits. Subunits NuoB, C, D, E, F, and G constitute the peripheral sector of the complex.

The protein localises to the cell inner membrane. The catalysed reaction is a quinone + NADH + 5 H(+)(in) = a quinol + NAD(+) + 4 H(+)(out). Functionally, NDH-1 shuttles electrons from NADH, via FMN and iron-sulfur (Fe-S) centers, to quinones in the respiratory chain. The immediate electron acceptor for the enzyme in this species is believed to be ubiquinone. Couples the redox reaction to proton translocation (for every two electrons transferred, four hydrogen ions are translocated across the cytoplasmic membrane), and thus conserves the redox energy in a proton gradient. This Coxiella burnetii (strain CbuG_Q212) (Coxiella burnetii (strain Q212)) protein is NADH-quinone oxidoreductase subunit D.